The primary structure comprises 142 residues: Large ribosomal subunit protein bL19 (142 aa).

Belongs to the bacterial ribosomal protein bL19 family.

Its function is as follows. This protein is located at the 30S-50S ribosomal subunit interface and may play a role in the structure and function of the aminoacyl-tRNA binding site. The sequence is that of Large ribosomal subunit protein bL19 from Rickettsia bellii (strain OSU 85-389).